Consider the following 495-residue polypeptide: Glutamyl-tRNA(Gln) amidotransferase subunit A (495 aa).

Active-site charge relay system residues include Lys78 and Ser158. Residue Ser182 is the Acyl-ester intermediate of the active site.

This sequence belongs to the amidase family. GatA subfamily. Heterotrimer of A, B and C subunits.

The enzyme catalyses L-glutamyl-tRNA(Gln) + L-glutamine + ATP + H2O = L-glutaminyl-tRNA(Gln) + L-glutamate + ADP + phosphate + H(+). Its function is as follows. Allows the formation of correctly charged Gln-tRNA(Gln) through the transamidation of misacylated Glu-tRNA(Gln) in organisms which lack glutaminyl-tRNA synthetase. The reaction takes place in the presence of glutamine and ATP through an activated gamma-phospho-Glu-tRNA(Gln). The protein is Glutamyl-tRNA(Gln) amidotransferase subunit A of Dinoroseobacter shibae (strain DSM 16493 / NCIMB 14021 / DFL 12).